The primary structure comprises 122 residues: Protein FAM223A (122 aa).

This sequence belongs to the FAM223 family.

The sequence is that of Protein FAM223A (FAM223A) from Homo sapiens (Human).